Consider the following 615-residue polypeptide: Nuclear receptor subfamily 1 group D member 1 (615 aa).

The segment covering 1–12 (MTTLDSNNNTGG) has biased composition (polar residues). The required for phosphorylation by CSNK1E and cytoplasmic localization stretch occupies residues 1–70 (MTTLDSNNNT…TQDPARSFGT (70 aa)). Residues 1–120 (MTTLDSNNNT…SSRVSPSKGT (120 aa)) are disordered. The interval 1-129 (MTTLDSNNNT…TSNITKLNGM (129 aa)) is modulating. Low complexity predominate over residues 14–34 (ITYIGSSGSSPSRTSPESLYS). Residues 35–48 (DSSNGSFQSLTQGC) show a composition bias toward polar residues. The crucial for activation of GJA1 stretch occupies residues 49–285 (PTYFPPSPTG…PPRSPSPEPT (237 aa)). Phosphoserine; by GSK3-beta occurs at positions 55 and 59. Positions 72–103 (PPSLSDDSSPSSASSSSSSSSSSFYNGSPPGS) are enriched in low complexity. The segment at residues 130–206 (VLLCKVCGDV…VGMSRDAVRF (77 aa)) is a DNA-binding region (nuclear receptor). 2 consecutive NR C4-type zinc fingers follow at residues 133–153 (CKVCGDVASGFHYGVHACEGC) and 170–194 (CLKNENCSIVRINRNRCQQCRFKKC). An N6-acetyllysine; by KAT5 mark is found at Lys192 and Lys193. Disordered regions lie at residues 235-287 (LCPL…PTVE), 312-337 (PGNFNANHASGSPPATTPQCWESQGC), and 357-385 (NGLRQGPSSYPPTWPSGPAHHSCHQPNSN). The span at 253–262 (PSPPPAPAPT) shows a compositional bias: pro residues. The residue at position 275 (Thr275) is a Phosphothreonine; by CDK1. Positions 285–615 (TVEDVISQVA…KLLSFRVDAQ (331 aa)) constitute an NR LBD domain. Lys401 is subject to N6-acetyllysine. Cys419 is a heme binding site. An N6-acetyllysine modification is found at Lys592. Heme is bound at residue His603.

It belongs to the nuclear hormone receptor family. NR1 subfamily. In terms of assembly, binds DNA as a monomer or a homodimer. Interacts with C1D, NR2E3, SP1 and ZNHIT1. Interacts with OPHN1 (via C-terminus). Interacts with PER2; the interaction associates PER2 to BMAL1 promoter region. Interacts with CRY1. Interacts with CCAR2. Interacts with SIAH2. Interacts with FBXW7 and CDK1. Interacts with HUWE1. Interacts with NR0B2. Interacts with NFIL3. Interacts (via domain NR LBD) with HSP90AA1 and HSP90AB1. Ubiquitinated, leading to its proteasomal degradation. Ubiquitinated by the SCF(FBXW7) complex when phosphorylated by CDK1 leading to its proteasomal degradation. Ubiquitinated by SIAH2; leading to its proteasomal degradation. Rapidly ubiquitinated in response to inflammatory triggers and sumoylation is a prerequisite to its ubiquitination. In terms of processing, sumoylated by UBE2I, desumoylated by SENP1, and sumoylation is a prerequisite to its ubiquitination. Post-translationally, phosphorylated by CSNK1E; phosphorylation enhances its cytoplasmic localization. Undergoes lysosome-mediated degradation in a time-dependent manner in the liver.

Its subcellular location is the nucleus. It is found in the cytoplasm. The protein localises to the cell projection. It localises to the dendrite. The protein resides in the dendritic spine. Transcriptional repressor which coordinates circadian rhythm and metabolic pathways in a heme-dependent manner. Integral component of the complex transcription machinery that governs circadian rhythmicity and forms a critical negative limb of the circadian clock by directly repressing the expression of core clock components BMAL1, CLOCK and CRY1. Also regulates genes involved in metabolic functions, including lipid and bile acid metabolism, adipogenesis, gluconeogenesis and the macrophage inflammatory response. Acts as a receptor for heme which stimulates its interaction with the NCOR1/HDAC3 corepressor complex, enhancing transcriptional repression. Recognizes two classes of DNA response elements within the promoter of its target genes and can bind to DNA as either monomers or homodimers, depending on the nature of the response element. Binds as a monomer to a response element composed of the consensus half-site motif 5'-[A/G]GGTCA-3' preceded by an A/T-rich 5' sequence (RevRE), or as a homodimer to a direct repeat of the core motif spaced by two nucleotides (RevDR-2). Acts as a potent competitive repressor of ROR alpha (RORA) function and regulates the levels of its ligand heme by repressing the expression of PPARGC1A, a potent inducer of heme synthesis. Regulates lipid metabolism by repressing the expression of APOC3 and by influencing the activity of sterol response element binding proteins (SREBPs); represses INSIG2 which interferes with the proteolytic activation of SREBPs which in turn govern the rhythmic expression of enzymes with key functions in sterol and fatty acid synthesis. Regulates gluconeogenesis via repression of G6PC1 and PEPCK and adipocyte differentiation via repression of PPARG. Regulates glucagon release in pancreatic alpha-cells via the AMPK-NAMPT-SIRT1 pathway and the proliferation, glucose-induced insulin secretion and expression of key lipogenic genes in pancreatic-beta cells. Positively regulates bile acid synthesis by increasing hepatic expression of CYP7A1 via repression of NR0B2 and NFIL3 which are negative regulators of CYP7A1. Modulates skeletal muscle oxidative capacity by regulating mitochondrial biogenesis and autophagy; controls mitochondrial biogenesis and respiration by interfering with the STK11-PRKAA1/2-SIRT1-PPARGC1A signaling pathway. Represses the expression of SERPINE1/PAI1, an important modulator of cardiovascular disease and the expression of inflammatory cytokines and chemokines in macrophages. Represses gene expression at a distance in macrophages by inhibiting the transcription of enhancer-derived RNAs (eRNAs). Plays a role in the circadian regulation of body temperature and negatively regulates thermogenic transcriptional programs in brown adipose tissue (BAT); imposes a circadian oscillation in BAT activity, increasing body temperature when awake and depressing thermogenesis during sleep. In concert with NR2E3, regulates transcriptional networks critical for photoreceptor development and function. In addition to its activity as a repressor, can also act as a transcriptional activator. In the ovarian granulosa cells acts as a transcriptional activator of STAR which plays a role in steroid biosynthesis. In collaboration with SP1, activates GJA1 transcription in a heme-independent manner. Represses the transcription of CYP2B10, CYP4A10 and CYP4A14. Represses the transcription of CES2. Represses and regulates the circadian expression of TSHB in a NCOR1-dependent manner. Negatively regulates the protein stability of NR3C1 and influences the time-dependent subcellular distribution of NR3C1, thereby affecting its transcriptional regulatory activity. Plays a critical role in the circadian control of neutrophilic inflammation in the lung; under resting, non-stress conditions, acts as a rhythmic repressor to limit inflammatory activity whereas in the presence of inflammatory triggers undergoes ubiquitin-mediated degradation thereby relieving inhibition of the inflammatory response. Plays a key role in the circadian regulation of microglial activation and neuroinflammation; suppresses microglial activation through the NF-kappaB pathway in the central nervous system. Plays a role in the regulation of the diurnal rhythms of lipid and protein metabolism in the skeletal muscle via transcriptional repression of genes controlling lipid and amino acid metabolism in the muscle. The protein is Nuclear receptor subfamily 1 group D member 1 (Nr1d1) of Rattus norvegicus (Rat).